Here is a 77-residue protein sequence, read N- to C-terminus: Small ribosomal subunit protein uS17 (77 aa).

Belongs to the universal ribosomal protein uS17 family. In terms of assembly, part of the 30S ribosomal subunit.

In terms of biological role, one of the primary rRNA binding proteins, it binds specifically to the 5'-end of 16S ribosomal RNA. This Rickettsia rickettsii (strain Sheila Smith) protein is Small ribosomal subunit protein uS17.